A 512-amino-acid chain; its full sequence is Cytochrome P450 1A1 (512 aa).

A mitochondrial targeting signal region spans residues 29–40; that stretch reads SRPRVPKGLKNP. A glycan (O-linked (GlcNAc) serine) is linked at serine 67. Position 224 (phenylalanine 224) interacts with substrate. Heme is bound at residue cysteine 457.

It belongs to the cytochrome P450 family. Interacts with cytosolic chaperones HSP70 and HSP90; this interaction is required for initial targeting to mitochondria. Interacts (via mitochondrial targeting signal) with TOMM40 (via N-terminus); this interaction is required for translocation across the mitochondrial outer membrane. Heme is required as a cofactor.

The protein localises to the endoplasmic reticulum membrane. Its subcellular location is the mitochondrion inner membrane. It is found in the microsome membrane. It localises to the cytoplasm. It catalyses the reaction an organic molecule + reduced [NADPH--hemoprotein reductase] + O2 = an alcohol + oxidized [NADPH--hemoprotein reductase] + H2O + H(+). The catalysed reaction is estrone + reduced [NADPH--hemoprotein reductase] + O2 = 2-hydroxyestrone + oxidized [NADPH--hemoprotein reductase] + H2O + H(+). The enzyme catalyses estrone + reduced [NADPH--hemoprotein reductase] + O2 = 4-hydroxyestrone + oxidized [NADPH--hemoprotein reductase] + H2O + H(+). It carries out the reaction estrone + reduced [NADPH--hemoprotein reductase] + O2 = 6alpha-hydroxyestrone + oxidized [NADPH--hemoprotein reductase] + H2O + H(+). It catalyses the reaction estrone + reduced [NADPH--hemoprotein reductase] + O2 = 15alpha-hydroxyestrone + oxidized [NADPH--hemoprotein reductase] + H2O + H(+). The catalysed reaction is estrone + reduced [NADPH--hemoprotein reductase] + O2 = 16alpha-hydroxyestrone + oxidized [NADPH--hemoprotein reductase] + H2O + H(+). The enzyme catalyses 17beta-estradiol + reduced [NADPH--hemoprotein reductase] + O2 = 2-hydroxy-17beta-estradiol + oxidized [NADPH--hemoprotein reductase] + H2O + H(+). It carries out the reaction 17beta-estradiol + reduced [NADPH--hemoprotein reductase] + O2 = 4-hydroxy-17beta-estradiol + oxidized [NADPH--hemoprotein reductase] + H2O + H(+). It catalyses the reaction 17beta-estradiol + reduced [NADPH--hemoprotein reductase] + O2 = 6alpha-hydroxy-17beta-estradiol + oxidized [NADPH--hemoprotein reductase] + H2O + H(+). The catalysed reaction is 17beta-estradiol + reduced [NADPH--hemoprotein reductase] + O2 = 7alpha-hydroxy-17beta-estradiol + oxidized [NADPH--hemoprotein reductase] + H2O + H(+). The enzyme catalyses 17beta-estradiol + reduced [NADPH--hemoprotein reductase] + O2 = 15alpha-hydroxy-17beta-estradiol + oxidized [NADPH--hemoprotein reductase] + H2O + H(+). It carries out the reaction (5Z,8Z,11Z)-eicosatrienoate + reduced [NADPH--hemoprotein reductase] + O2 = 19-hydroxy-(5Z,8Z,11Z)-eicosatrienoate + oxidized [NADPH--hemoprotein reductase] + H2O + H(+). It catalyses the reaction (5Z,8Z,11Z,14Z)-eicosatetraenoate + reduced [NADPH--hemoprotein reductase] + O2 = 16-hydroxy-(5Z,8Z,11Z,14Z)-eicosatetraenoate + oxidized [NADPH--hemoprotein reductase] + H2O + H(+). The catalysed reaction is (5Z,8Z,11Z,14Z)-eicosatetraenoate + reduced [NADPH--hemoprotein reductase] + O2 = 17-hydroxy-(5Z,8Z,11Z,14Z)-eicosatetraenoate + oxidized [NADPH--hemoprotein reductase] + H2O + H(+). The enzyme catalyses (5Z,8Z,11Z,14Z)-eicosatetraenoate + reduced [NADPH--hemoprotein reductase] + O2 = 18-hydroxy-(5Z,8Z,11Z,14Z)-eicosatetraenoate + oxidized [NADPH--hemoprotein reductase] + H2O + H(+). It carries out the reaction (5Z,8Z,11Z,14Z)-eicosatetraenoate + reduced [NADPH--hemoprotein reductase] + O2 = 19-hydroxy-(5Z,8Z,11Z,14Z)-eicosatetraenoate + oxidized [NADPH--hemoprotein reductase] + H2O + H(+). It catalyses the reaction (5Z,8Z,11Z,14Z,17Z)-eicosapentaenoate + reduced [NADPH--hemoprotein reductase] + O2 = 19-hydroxy-(5Z,8Z,11Z,14Z,17Z)-eicosapentaenoate + oxidized [NADPH--hemoprotein reductase] + H2O + H(+). The catalysed reaction is (5Z,8Z,11Z,14Z)-eicosatetraenoate + reduced [NADPH--hemoprotein reductase] + O2 = (8R,9S)-epoxy-(5Z,11Z,14Z)-eicosatrienoate + oxidized [NADPH--hemoprotein reductase] + H2O + H(+). The enzyme catalyses (5Z,8Z,11Z,14Z)-eicosatetraenoate + reduced [NADPH--hemoprotein reductase] + O2 = (11R,12S)-epoxy-(5Z,8Z,14Z)-eicosatrienoate + oxidized [NADPH--hemoprotein reductase] + H2O + H(+). It carries out the reaction (5Z,8Z,11Z,14Z)-eicosatetraenoate + reduced [NADPH--hemoprotein reductase] + O2 = (14S,15R)-epoxy-(5Z,8Z,11Z)-eicosatrienoate + oxidized [NADPH--hemoprotein reductase] + H2O + H(+). It catalyses the reaction (5Z,8Z,11Z,14Z)-eicosatetraenoate + reduced [NADPH--hemoprotein reductase] + O2 = (14R,15S)-epoxy-(5Z,8Z,11Z)-eicosatrienoate + oxidized [NADPH--hemoprotein reductase] + H2O + H(+). The catalysed reaction is (5Z,8Z,11Z,14Z,17Z)-eicosapentaenoate + reduced [NADPH--hemoprotein reductase] + O2 = (17R,18S)-epoxy-(5Z,8Z,11Z,14Z)-eicosatetraenoate + oxidized [NADPH--hemoprotein reductase] + H2O + H(+). The enzyme catalyses (4Z,7Z,10Z,13Z,16Z,19Z)-docosahexaenoate + reduced [NADPH--hemoprotein reductase] + O2 = (19S,20R)-epoxy-(4Z,7Z,10Z,13Z,16Z)-docosapentaenoate + oxidized [NADPH--hemoprotein reductase] + H2O + H(+). It carries out the reaction (4Z,7Z,10Z,13Z,16Z,19Z)-docosahexaenoate + reduced [NADPH--hemoprotein reductase] + O2 = (19R,20S)-epoxy-(4Z,7Z,10Z,13Z,16Z)-docosapentaenoate + oxidized [NADPH--hemoprotein reductase] + H2O + H(+). It catalyses the reaction all-trans-retinol + reduced [NADPH--hemoprotein reductase] + O2 = all-trans-retinal + oxidized [NADPH--hemoprotein reductase] + 2 H2O + H(+). The catalysed reaction is all-trans-retinal + reduced [NADPH--hemoprotein reductase] + O2 = all-trans-retinoate + oxidized [NADPH--hemoprotein reductase] + H2O + 2 H(+). The enzyme catalyses (13S)-hydroperoxy-(9Z,11E)-octadecadienoate = 13-oxo-(9Z,11E)-octadecadienoate + H2O. It carries out the reaction (12S)-hydroperoxy-(5Z,8Z,10E,14Z)-eicosatetraenoate = 12-oxo-(5Z,8Z,10E,14Z)-eicosatetraenoate + H2O. It catalyses the reaction (15S)-hydroperoxy-(5Z,8Z,11Z,13E)-eicosatetraenoate = 15-oxo-(5Z,8Z,11Z,13E)-eicosatetraenoate + H2O. The catalysed reaction is (5S)-hydroperoxy-(6E,8Z,11Z,14Z)-eicosatetraenoate = 5-oxo-(6E,8Z,11Z,14Z)-eicosatetraenoate + H2O. It functions in the pathway steroid hormone biosynthesis. The protein operates within lipid metabolism; fatty acid metabolism. It participates in cofactor metabolism; retinol metabolism. A cytochrome P450 monooxygenase involved in the metabolism of various endogenous substrates, including fatty acids, steroid hormones and vitamins. Mechanistically, uses molecular oxygen inserting one oxygen atom into a substrate, and reducing the second into a water molecule, with two electrons provided by NADPH via cytochrome P450 reductase (CPR; NADPH-ferrihemoprotein reductase). Catalyzes the hydroxylation of carbon-hydrogen bonds. Exhibits high catalytic activity for the formation of hydroxyestrogens from estrone (E1) and 17beta-estradiol (E2), namely 2-hydroxy E1 and E2, as well as D-ring hydroxylated E1 and E2 at the C15alpha and C16alpha positions. Displays different regioselectivities for polyunsaturated fatty acids (PUFA) hydroxylation. Catalyzes the epoxidation of double bonds of certain PUFA. Converts arachidonic acid toward epoxyeicosatrienoic acid (EET) regioisomers, 8,9-, 11,12-, and 14,15-EET, that function as lipid mediators in the vascular system. Displays an absolute stereoselectivity in the epoxidation of eicosapentaenoic acid (EPA) producing the 17(R),18(S) enantiomer. May play an important role in all-trans retinoic acid biosynthesis in extrahepatic tissues. Catalyzes two successive oxidative transformation of all-trans retinol to all-trans retinal and then to the active form all-trans retinoic acid. May also participate in eicosanoids metabolism by converting hydroperoxide species into oxo metabolites (lipoxygenase-like reaction, NADPH-independent). The polypeptide is Cytochrome P450 1A1 (CYP1A1) (Macaca mulatta (Rhesus macaque)).